The primary structure comprises 303 residues: 2-dehydropantoate 2-reductase (303 aa).

NADP(+)-binding positions include 7–12 (GCGALG), N98, and A122. Residue N98 coordinates substrate. Catalysis depends on K176, which acts as the Proton donor. Residues N180, N184, N194, and S244 each coordinate substrate. E256 provides a ligand contact to NADP(+).

It belongs to the ketopantoate reductase family. Monomer.

The protein localises to the cytoplasm. The enzyme catalyses (R)-pantoate + NADP(+) = 2-dehydropantoate + NADPH + H(+). It functions in the pathway cofactor biosynthesis; (R)-pantothenate biosynthesis; (R)-pantoate from 3-methyl-2-oxobutanoate: step 2/2. Its function is as follows. Catalyzes the NADPH-dependent reduction of ketopantoate into pantoic acid. The sequence is that of 2-dehydropantoate 2-reductase (panE) from Escherichia coli O157:H7.